The chain runs to 138 residues: MTLNLRVMTPNRTVWNSEVQEMILSTNSGQIGVLPNHAPLLTALDIGITKIRLNGQWSTMALMGGFAMVDNNQVTILVNEAEEAAGIDPQEAKETFRIAQTNLARAEGKKQVIEANLAFKRAKARLEAIDATLSYASN.

This sequence belongs to the ATPase epsilon chain family. F-type ATPases have 2 components, CF(1) - the catalytic core - and CF(0) - the membrane proton channel. CF(1) has five subunits: alpha(3), beta(3), gamma(1), delta(1), epsilon(1). CF(0) has three main subunits: a, b and c.

Its subcellular location is the plastid. It is found in the chloroplast thylakoid membrane. Produces ATP from ADP in the presence of a proton gradient across the membrane. This is ATP synthase epsilon chain, chloroplastic from Huperzia lucidula (Shining clubmoss).